Reading from the N-terminus, the 345-residue chain is RDS/peripherin-like protein xRDS36 (345 aa).

Residues 1–24 (MVLFKAKFSFQRRVKLAQTLWLLS) lie on the Cytoplasmic side of the membrane. A helical membrane pass occupies residues 25-43 (WLSVLVGCLTFGMGIFLKV). At 44-61 (QLWIHNEVMDNTTAHAVP) the chain is on the lumenal side. N-linked (GlcNAc...) asparagine glycosylation occurs at Asn-54. The helical transmembrane segment at 62-80 (NTVITAGLVGILLGYFAGK) threads the bilayer. At 81–99 (ISQASMDLTKYQRWKSFMM) the chain is on the cytoplasmic side. Residues 100–123 (PFFFLAILSCIVCLAALVLSVALR) traverse the membrane as a helical segment. The Lumenal segment spans residues 124-264 (GTLEESLKIG…LGYYTGIMAT (141 aa)). An N-linked (GlcNAc...) asparagine glycan is attached at Asn-229. Residues 265–290 (NGAAVTLSFLLQASVLVSLRYVQTSM) traverse the membrane as a helical segment. Topologically, residues 291–345 (DKIRDPDDVEADTEGFLLEKGVMETVNSSLEKIKDLFKSNQVETAEGGGEGAAGS) are cytoplasmic.

Belongs to the PRPH2/ROM1 family. In terms of assembly, homodimer; disulfide-linked. In terms of tissue distribution, rod specific.

Its subcellular location is the membrane. This Xenopus laevis (African clawed frog) protein is RDS/peripherin-like protein xRDS36 (rds36).